Consider the following 244-residue polypeptide: Cobalt transport protein CbiM (244 aa).

The signal sequence occupies residues 1–28 (MKKLWKFIPFVLMGVIYFTLTNPESAHA). 6 helical membrane passes run 37 to 57 (PVKWAVFWLIVFIPFLVLGLI), 71 to 91 (LLLALCAAFIFVLSALKIPSV), 103 to 123 (LATVMFGPLVVSVLGVIVLLF), 135 to 155 (TLGANAMSMAVIGPMVGFVVY), 166 to 186 (SVSIFLCAMTADLATYFTTSV), and 206 to 226 (FMAIFCVTQVPIAIAEGLLTV).

The protein belongs to the CbiM family. In terms of assembly, forms an energy-coupling factor (ECF) transporter complex composed of an ATP-binding protein (A component, CbiO), a transmembrane protein (T component, CbiQ) and 2 possible substrate-capture proteins (S components, CbiM and CbiN) of unknown stoichimetry.

The protein localises to the cell membrane. It participates in cofactor biosynthesis; adenosylcobalamin biosynthesis. In terms of biological role, part of the energy-coupling factor (ECF) transporter complex CbiMNOQ involved in cobalt import. This Listeria seeligeri serovar 1/2b (strain ATCC 35967 / DSM 20751 / CCM 3970 / CCUG 15530 / CIP 100100 / LMG 11386 / NCTC 11856 / SLCC 3954 / 1120) protein is Cobalt transport protein CbiM.